A 633-amino-acid polypeptide reads, in one-letter code: Copine-7 (633 aa).

2 consecutive C2 domains span residues 2–133 (SAGS…MRVS) and 212–339 (NAGK…AQWD). Residues aspartate 245, aspartate 251, aspartate 307, aspartate 309, and aspartate 315 each contribute to the Ca(2+) site. Residues 382–581 (HFTVAIDFTA…PALRDIVQFV (200 aa)) form the VWFA domain.

Belongs to the copine family. The cofactor is Ca(2+). In terms of tissue distribution, expressed in the brain, testis, thymus and small intestine.

It is found in the cytoplasm. The protein resides in the nucleus. It localises to the cell membrane. Its function is as follows. Calcium-dependent phospholipid-binding protein that may play a role in calcium-mediated intracellular processes. The chain is Copine-7 from Homo sapiens (Human).